The following is a 651-amino-acid chain: Coiled-coil domain-containing protein 81 (651 aa).

The disordered stretch occupies residues 194 to 314; the sequence is LSSRESFGKR…PKTSPAPACQ (121 aa). A Phosphoserine modification is found at Ser-206. Composition is skewed to basic and acidic residues over residues 212 to 222 and 232 to 250; these read RIEHKETENKP and GENR…KEEG. Polar residues predominate over residues 265 to 275; sequence SISPAKVTSGS. Residues Ser-273, Ser-275, Ser-294, and Ser-416 each carry the phosphoserine modification. Coiled coils occupy residues 428–465 and 539–566; these read SQSL…EELA and KRNT…EHLA.

The protein resides in the cytoplasm. It is found in the cytoskeleton. Its subcellular location is the microtubule organizing center. It localises to the centrosome. The polypeptide is Coiled-coil domain-containing protein 81 (Ccdc81) (Rattus norvegicus (Rat)).